Reading from the N-terminus, the 173-residue chain is Mesencephalic astrocyte-derived neurotrophic factor homolog (173 aa).

Positions Met-1–Ala-22 are cleaved as a signal peptide. 4 cysteine pairs are disulfide-bonded: Cys-28–Cys-114, Cys-31–Cys-103, Cys-61–Cys-72, and Cys-148–Cys-151.

This sequence belongs to the ARMET family.

The protein localises to the secreted. In terms of biological role, required during the maturation of the embryonic nervous system for maintenance of neuronal and cuticular connectivity. Essential for maintenance of dopaminergic neurons and dopamine levels. The protein is Mesencephalic astrocyte-derived neurotrophic factor homolog of Drosophila persimilis (Fruit fly).